Here is a 390-residue protein sequence, read N- to C-terminus: ATP phosphoribosyltransferase regulatory subunit (390 aa).

The protein belongs to the class-II aminoacyl-tRNA synthetase family. HisZ subfamily. Heteromultimer composed of HisG and HisZ subunits.

Its subcellular location is the cytoplasm. It participates in amino-acid biosynthesis; L-histidine biosynthesis; L-histidine from 5-phospho-alpha-D-ribose 1-diphosphate: step 1/9. In terms of biological role, required for the first step of histidine biosynthesis. May allow the feedback regulation of ATP phosphoribosyltransferase activity by histidine. The protein is ATP phosphoribosyltransferase regulatory subunit of Bacillus velezensis (strain DSM 23117 / BGSC 10A6 / LMG 26770 / FZB42) (Bacillus amyloliquefaciens subsp. plantarum).